The sequence spans 604 residues: Prostaglandin G/H synthase 2 (604 aa).

The first 17 residues, 1-17 (MLARALLLCAAVALSGA), serve as a signal peptide directing secretion. The region spanning 18–55 (ANPCCSHPCQNRGVCMSVGFDQYKCDCTRTGFYGENCT) is the EGF-like domain. Disulfide bonds link Cys21/Cys32, Cys22/Cys145, Cys26/Cys42, and Cys44/Cys54. Asn53 is a glycosylation site (N-linked (GlcNAc...) asparagine). Arg106 contributes to the substrate binding site. Asn130 is a glycosylation site (N-linked (GlcNAc...) asparagine). Residue His193 is the Proton acceptor of the active site. Tyr341 contacts substrate. Tyr371 functions as the For cyclooxygenase activity in the catalytic mechanism. Position 374 (His374) interacts with heme b. N-linked (GlcNAc...) asparagine glycosylation occurs at Asn396. Cys526 bears the S-nitrosocysteine mark. A disulfide bond links Cys555 and Cys561. Ser565 bears the O-acetylserine mark. Residue Asn580 is glycosylated (N-linked (GlcNAc...) asparagine).

It belongs to the prostaglandin G/H synthase family. Homodimer. The cofactor is heme b. S-nitrosylation by NOS2 (iNOS) activates enzyme activity. S-nitrosylation may take place on different Cys residues in addition to Cys-526. In terms of processing, acetylated at Ser-565 by SPHK1. During neuroinflammation, acetylation by SPHK1 promotes neuronal secretion of specialized preresolving mediators (SPMs), especially 15-R-lipoxin A4, which results in an increase of phagocytic microglia.

The protein localises to the microsome membrane. Its subcellular location is the endoplasmic reticulum membrane. The protein resides in the nucleus inner membrane. It localises to the nucleus outer membrane. It catalyses the reaction (5Z,8Z,11Z,14Z)-eicosatetraenoate + AH2 + 2 O2 = prostaglandin H2 + A + H2O. It carries out the reaction (5Z,8Z,11Z,14Z)-eicosatetraenoate + 2 O2 = prostaglandin G2. The catalysed reaction is prostaglandin G2 + AH2 = prostaglandin H2 + A + H2O. The enzyme catalyses (5Z,8Z,11Z,14Z,17Z)-eicosapentaenoate + 2 O2 = prostaglandin G3. It catalyses the reaction prostaglandin G3 + AH2 = prostaglandin H3 + A + H2O. It carries out the reaction (8Z,11Z,14Z)-eicosatrienoate + 2 O2 = prostaglandin G1. The catalysed reaction is prostaglandin G1 + AH2 = prostaglandin H1 + A + H2O. The enzyme catalyses 2-(5Z,8Z,11Z,14Z)-eicosatetraenoyl-sn-glycero-3-phosphoethanolamine + 2 O2 = 2-(prostaglandin G2)-sn-glycero-3-phosphoethanolamine. It catalyses the reaction 2-(prostaglandin G2)-sn-glycero-3-phosphoethanolamine + AH2 = 2-(prostaglandin H2)-sn-glycero-3-phosphoethanolamine + A + H2O. It carries out the reaction 2-(5Z,8Z,11Z,14Z)-eicosatetraenoyl-sn-glycero-3-phosphocholine + 2 O2 = 2-(prostaglandin G2)-sn-glycero-3-phosphocholine. The catalysed reaction is 2-(prostaglandin G2)-sn-glycero-3-phosphocholine + AH2 = 2-(prostaglandin H2)-sn-glycero-3-phosphocholine + A + H2O. The enzyme catalyses (15S)-hydroperoxy-(5Z,8Z,11Z,13E)-eicosatetraenoate + AH2 = (15S)-hydroxy-(5Z,8Z,11Z,13E)-eicosatetraenoate + A + H2O. It catalyses the reaction 2-(5Z,8Z,11Z,14Z)-eicosatetraenoyl-sn-glycero-3-phosphocholine + AH2 + O2 = 2-[(15S)-hydroxy-(5Z,8Z,11Z,13E)-eicosatetraenoyl]-sn-glycero-3-phosphocholine + A + H2O. It carries out the reaction 2-(5Z,8Z,11Z,14Z)-eicosatetraenoyl-sn-glycero-3-phosphocholine + AH2 + O2 = 2-[(15R)-hydroxy-(5Z,8Z,11Z,13E)-eicosatetraenoyl]-sn-glycero-3-phosphocholine + A + H2O. The catalysed reaction is 2-(5Z,8Z,11Z,14Z)-eicosatetraenoyl-sn-glycero-3-phosphocholine + AH2 + O2 = 2-[(11R)-hydroxy-(5Z,8Z,12E,14Z)-eicosatetraenoyl]-sn-glycero-3-phosphocholine + A + H2O. The enzyme catalyses (9Z,12Z)-octadecadienoate + AH2 + O2 = 9-hydroxy-(10E,12Z)-octadecadienoate + A + H2O. It catalyses the reaction (9Z,12Z)-octadecadienoate + AH2 + O2 = 13-hydroxy-(9Z,11E)-octadecadienoate + A + H2O. It carries out the reaction (5Z,8Z,11Z,14Z)-eicosatetraenoate + AH2 + O2 = (15R)-hydroxy-(5Z,8Z,11Z,13E)-eicosatetraenoate + A + H2O. The catalysed reaction is (5Z,8Z,11Z,14Z)-eicosatetraenoate + AH2 + O2 = (11R)-hydroxy-(5Z,8Z,12E,14Z)-eicosatetraenoate + A + H2O. The enzyme catalyses (5Z,8Z,11Z,14Z,17Z)-eicosapentaenoate + AH2 + O2 = (11R)-hydroxy-(5Z,8Z,12E,14Z,17Z)-eicosapentaenoate + A + H2O. It catalyses the reaction (5Z,8Z,11Z,14Z,17Z)-eicosapentaenoate + AH2 + O2 = (18S)-hydroxy-(5Z,8Z,11Z,14Z,16E)-eicosapentaenoate + A + H2O. It carries out the reaction (5Z,8Z,11Z,14Z,17Z)-eicosapentaenoate + AH2 + O2 = (18R)-hydroxy-(5Z,8Z,11Z,14Z,16E)-eicosapentaenoate + A + H2O. The catalysed reaction is (5Z,8Z,11Z,14Z,17Z)-eicosapentaenoate + AH2 + O2 = (15R)-hydroxy-(5Z,8Z,11Z,13E,17Z)-eicosapentaenoate + A + H2O. The enzyme catalyses (5Z,8Z,11Z,14Z,17Z)-eicosapentaenoate + AH2 + O2 = (15S)-hydroxy-(5Z,8Z,11Z,13E,17Z)-eicosapentaenoate + A + H2O. It catalyses the reaction (7Z,10Z,13Z,16Z,19Z)-docosapentaenoate + AH2 + O2 = 13R-hydroxy-(7Z,10Z,14E,16Z,19Z)-docosapentaenoate + A + H2O. It carries out the reaction (4Z,7Z,10Z,13Z,16Z,19Z)-docosahexaenoate + AH2 + O2 = 13-hydroxy-(4Z,7Z,10Z,14E,16Z,19Z)-docosahexaenoate + A + H2O. The catalysed reaction is (5S)-hydroxy-(6E,8Z,11Z,14Z)-eicosatetraenoate + AH2 + O2 = (5S,15R)-dihydroxy-(6E,8Z,11Z,13E)-eicosatetraenoate + A + H2O. The enzyme catalyses (4Z,7Z,10Z,13Z,16Z,19Z)-docosahexaenoate + AH2 + O2 = 17R-hydroxy-(4Z,7Z,10Z,13Z,15E,19Z)-docosahexaenoate + A + H2O. It catalyses the reaction (5S)-hydroxy-(6E,8Z,11Z,14Z)-eicosatetraenoate + AH2 + O2 = (5S,15S)-dihydroxy-(6E,8Z,11Z,13E)-eicosatetraenoate + A + H2O. It carries out the reaction (5S)-hydroxy-(6E,8Z,11Z,14Z)-eicosatetraenoate + AH2 + O2 = (5S,11R)-dihydroxy-(6E,8Z,12E,14Z)-eicosatetraenoate + A + H2O. The catalysed reaction is 2-(5Z,8Z,11Z,14Z-eicosatetraenoyl)-glycerol + 2 O2 = 2-glyceryl-prostaglandin G2. The enzyme catalyses 2-glyceryl-prostaglandin G2 + AH2 = 2-glyceryl-prostaglandin H2 + A + H2O. It catalyses the reaction (5Z,8Z,11Z,14Z)-eicosatetraenoate + O2 = (15R)-hydroperoxy-(5Z,8Z,11Z,13E)-eicosatetraenoate. It carries out the reaction (5Z,8Z,11Z,14Z)-eicosatetraenoate + O2 = 11R-hydroperoxy-(5Z,8Z,12E,14Z)-eicosatetraenoate. The catalysed reaction is (9Z,12Z)-octadecadienoate + AH2 + O2 = (9R)-hydroxy-(10E,12Z)-octadecadienoate + A + H2O. The enzyme catalyses (9Z,12Z)-octadecadienoate + AH2 + O2 = (9S)-hydroxy-(10E,12Z)-octadecadienoate + A + H2O. It catalyses the reaction (9Z,12Z)-octadecadienoate + AH2 + O2 = (13S)-hydroxy-(9Z,11E)-octadecadienoate + A + H2O. It carries out the reaction (9Z,12Z)-octadecadienoate + AH2 + O2 = (13R)-hydroxy-(9Z,11E)-octadecadienoate + A + H2O. It participates in lipid metabolism; prostaglandin biosynthesis. Functionally, dual cyclooxygenase and peroxidase in the biosynthesis pathway of prostanoids, a class of C20 oxylipins mainly derived from arachidonate ((5Z,8Z,11Z,14Z)-eicosatetraenoate, AA, C20:4(n-6)), with a particular role in the inflammatory response. The cyclooxygenase activity oxygenates AA to the hydroperoxy endoperoxide prostaglandin G2 (PGG2), and the peroxidase activity reduces PGG2 to the hydroxy endoperoxide prostaglandin H2 (PGH2), the precursor of all 2-series prostaglandins and thromboxanes. This complex transformation is initiated by abstraction of hydrogen at carbon 13 (with S-stereochemistry), followed by insertion of molecular O2 to form the endoperoxide bridge between carbon 9 and 11 that defines prostaglandins. The insertion of a second molecule of O2 (bis-oxygenase activity) yields a hydroperoxy group in PGG2 that is then reduced to PGH2 by two electrons. Similarly catalyzes successive cyclooxygenation and peroxidation of dihomo-gamma-linoleate (DGLA, C20:3(n-6)) and eicosapentaenoate (EPA, C20:5(n-3)) to corresponding PGH1 and PGH3, the precursors of 1- and 3-series prostaglandins. In an alternative pathway of prostanoid biosynthesis, converts 2-arachidonoyl lysophopholipids to prostanoid lysophopholipids, which are then hydrolyzed by intracellular phospholipases to release free prostanoids. Metabolizes 2-arachidonoyl glycerol yielding the glyceryl ester of PGH2, a process that can contribute to pain response. Generates lipid mediators from n-3 and n-6 polyunsaturated fatty acids (PUFAs) via a lipoxygenase-type mechanism. Oxygenates PUFAs to hydroperoxy compounds and then reduces them to corresponding alcohols. Plays a role in the generation of resolution phase interaction products (resolvins) during both sterile and infectious inflammation. Metabolizes docosahexaenoate (DHA, C22:6(n-3)) to 17R-HDHA, a precursor of the D-series resolvins (RvDs). As a component of the biosynthetic pathway of E-series resolvins (RvEs), converts eicosapentaenoate (EPA, C20:5(n-3)) primarily to 18S-HEPE that is further metabolized by ALOX5 and LTA4H to generate 18S-RvE1 and 18S-RvE2. In vascular endothelial cells, converts docosapentaenoate (DPA, C22:5(n-3)) to 13R-HDPA, a precursor for 13-series resolvins (RvTs) shown to activate macrophage phagocytosis during bacterial infection. In activated leukocytes, contributes to oxygenation of hydroxyeicosatetraenoates (HETE) to diHETES (5,15-diHETE and 5,11-diHETE). Can also use linoleate (LA, (9Z,12Z)-octadecadienoate, C18:2(n-6)) as substrate and produce hydroxyoctadecadienoates (HODEs) in a regio- and stereospecific manner, being (9R)-HODE ((9R)-hydroxy-(10E,12Z)-octadecadienoate) and (13S)-HODE ((13S)-hydroxy-(9Z,11E)-octadecadienoate) its major products. During neuroinflammation, plays a role in neuronal secretion of specialized preresolving mediators (SPMs) 15R-lipoxin A4 that regulates phagocytic microglia. This Bos taurus (Bovine) protein is Prostaglandin G/H synthase 2 (PTGS2).